Consider the following 564-residue polypeptide: Probable metalloprotease ARX1 (564 aa).

It belongs to the peptidase M24 family. In terms of assembly, component of the nucleoplasmic and cytoplasmic pre-60S ribosomal particles.

The protein resides in the cytoplasm. It localises to the nucleus. Its function is as follows. Probable metalloprotease involved in proper assembly of pre-ribosomal particles during the biogenesis of the 60S ribosomal subunit. Accompanies the pre-60S particles to the cytoplasm. The chain is Probable metalloprotease ARX1 (ARX1) from Candida albicans (strain SC5314 / ATCC MYA-2876) (Yeast).